Here is a 786-residue protein sequence, read N- to C-terminus: AT-rich interactive domain-containing protein 3 (786 aa).

The span at 1 to 16 (MENLTEIESTMESLTE) shows a compositional bias: low complexity. 3 disordered regions span residues 1–182 (MENL…HHAD), 199–251 (SGDH…IPAN), and 395–420 (DTTV…NSSA). 2 stretches are compositionally biased toward basic and acidic residues: residues 18–64 (ESER…HEDS) and 87–97 (DLPKIDDEKNS). Over residues 130–139 (ENIVSSEVSS) the composition is skewed to low complexity. Composition is skewed to basic and acidic residues over residues 141-156 (ILKD…RDTA), 169-182 (KLSE…HHAD), 199-219 (SGDH…ENQS), 234-248 (AEER…HKEI), and 402-416 (NNKD…ERQD). The region spanning 494 to 585 (EEDQSAFMKE…ALLEYERHKV (92 aa)) is the ARID domain. The disordered stretch occupies residues 606–638 (QASGSGRARRDAASRAMQGWHSQRLNGNGEVSD). The region spanning 686–786 (VTVVDVGPPA…FVRVPLEQLE (101 aa)) is the sHSP domain.

It belongs to the small heat shock protein (HSP20) family.

The protein resides in the nucleus. The sequence is that of AT-rich interactive domain-containing protein 3 (ARID3) from Arabidopsis thaliana (Mouse-ear cress).